Here is a 269-residue protein sequence, read N- to C-terminus: tRNA pseudouridine synthase A (269 aa).

Aspartate 51 (nucleophile) is an active-site residue. Tyrosine 109 contacts substrate.

It belongs to the tRNA pseudouridine synthase TruA family. Homodimer.

The enzyme catalyses uridine(38/39/40) in tRNA = pseudouridine(38/39/40) in tRNA. Functionally, formation of pseudouridine at positions 38, 39 and 40 in the anticodon stem and loop of transfer RNAs. The sequence is that of tRNA pseudouridine synthase A from Aeromonas salmonicida (strain A449).